The sequence spans 262 residues: Ribose-5-phosphate isomerase A (262 aa).

Substrate-binding positions include 33-36 (TGST), 89-92 (DGAD), and 102-105 (KGGG). Glutamate 111 acts as the Proton acceptor in catalysis. Lysine 129 contacts substrate.

Belongs to the ribose 5-phosphate isomerase family. As to quaternary structure, homodimer.

It catalyses the reaction aldehydo-D-ribose 5-phosphate = D-ribulose 5-phosphate. It functions in the pathway carbohydrate degradation; pentose phosphate pathway; D-ribose 5-phosphate from D-ribulose 5-phosphate (non-oxidative stage): step 1/1. Its function is as follows. Catalyzes the reversible conversion of ribose-5-phosphate to ribulose 5-phosphate. This is Ribose-5-phosphate isomerase A from Ruegeria sp. (strain TM1040) (Silicibacter sp.).